The primary structure comprises 149 residues: Putative oligosaccharyltransferase complex subunit CG9662 (149 aa).

At 1 to 32 (MIETLYNLPFHILVPPNIKVRRFSIPMPSPMA) the chain is on the cytoplasmic side. Residues 33-53 (VFSVILFSYFLVTGGIIYDVI) form a helical membrane-spanning segment. Residues 54–83 (VEPPSLGATVDEHGHSRPVAFMPYRVNGQY) are Extracellular-facing. A helical membrane pass occupies residues 84–104 (IMEGLASSFLFTVGGLGFIIM). Residues 105 to 117 (DQTHTPGKTNLNR) lie on the Cytoplasmic side of the membrane. Residues 118–138 (LLLTAMGFIFILVSFFTTWLF) traverse the membrane as a helical segment. The Extracellular portion of the chain corresponds to 139-149 (MRMKLPSYLQP).

Belongs to the OSTC family. In terms of assembly, component of the oligosaccharyltransferase (OST) complex.

It is found in the membrane. Functionally, subunit of the oligosaccharyl transferase (OST) complex that catalyzes the initial transfer of a defined glycan (Glc(3)Man(9)GlcNAc(2) in eukaryotes) from the lipid carrier dolichol-pyrophosphate to an asparagine residue within an Asn-X-Ser/Thr consensus motif in nascent polypeptide chains, the first step in protein N-glycosylation. N-glycosylation occurs cotranslationally and the complex associates with the Sec61 complex at the channel-forming translocon complex that mediates protein translocation across the endoplasmic reticulum (ER). All subunits are required for a maximal enzyme activity. This Drosophila melanogaster (Fruit fly) protein is Putative oligosaccharyltransferase complex subunit CG9662.